The following is a 448-amino-acid chain: Trigger factor (448 aa).

The PPIase FKBP-type domain maps to 172-257; it reads GDRVTVDFVG…MKKIEWPHLP (86 aa).

It belongs to the FKBP-type PPIase family. Tig subfamily.

The protein resides in the cytoplasm. The enzyme catalyses [protein]-peptidylproline (omega=180) = [protein]-peptidylproline (omega=0). Involved in protein export. Acts as a chaperone by maintaining the newly synthesized protein in an open conformation. Functions as a peptidyl-prolyl cis-trans isomerase. In Burkholderia ambifaria (strain ATCC BAA-244 / DSM 16087 / CCUG 44356 / LMG 19182 / AMMD) (Burkholderia cepacia (strain AMMD)), this protein is Trigger factor.